Consider the following 67-residue polypeptide: Large ribosomal subunit protein bL32 (67 aa).

Positions methionine 1–glutamine 19 are enriched in basic residues. A disordered region spans residues methionine 1–lysine 21.

It belongs to the bacterial ribosomal protein bL32 family.

The protein is Large ribosomal subunit protein bL32 of Clavibacter sepedonicus (Clavibacter michiganensis subsp. sepedonicus).